The following is a 170-amino-acid chain: Large ribosomal subunit protein uL10 (170 aa).

It belongs to the universal ribosomal protein uL10 family. As to quaternary structure, part of the ribosomal stalk of the 50S ribosomal subunit. The N-terminus interacts with L11 and the large rRNA to form the base of the stalk. The C-terminus forms an elongated spine to which L12 dimers bind in a sequential fashion forming a multimeric L10(L12)X complex.

Its function is as follows. Forms part of the ribosomal stalk, playing a central role in the interaction of the ribosome with GTP-bound translation factors. The chain is Large ribosomal subunit protein uL10 from Chlamydia caviae (strain ATCC VR-813 / DSM 19441 / 03DC25 / GPIC) (Chlamydophila caviae).